Reading from the N-terminus, the 506-residue chain is MSQTTNSYDSFQDADLCSAAFAEKQDEKDKLTKLREDFYIPTKGDLINKKYGFQKSGNNAKGHENGKCIYFCGNSLGLQPTRTKEYINRYLDTWASKGVFGHFTDYEGGLPPWLHIDDAVKEQTSKIVGALPSEVVIMETLTANLHLLMSSFYRPTKDRWKIIIEGKAFPSDHYAALSQIAHHDLDPSALITIEPPSSSAPYLSNEHILSVISKHAATTALVLLPGIQFYSGQFFDIELITRHCRALGITVGWDLAHAVGNVPLKLHDWNVDFAAWCNYKYMSGGPGVIGGAFVHERHGTVGETAPTTTPDGTNGNPKTISDESLTYRPRLSGWWGNDKSSRFTMDNKFVPIPGASGYQLSNPSALDMTSVMASLDVFALTTMDALRERSIRLTGYLEARLLRYPGGEPPYTIITPTNPAERGAQLSVMLRPGMLDSVLHHLEKEGVVVDERKPDVLRIAPAPLYNTFRDVHDFIGIFHEACRKALVKPAEAPKHSEGVPKAIQTT.

Pyridoxal 5'-phosphate-binding positions include Leu-141, Thr-142, 169–172 (FPSD), Asp-254, His-257, and Tyr-279. Lys-280 is subject to N6-(pyridoxal phosphate)lysine. Positions 303-319 (ETAPTTTPDGTNGNPKT) are enriched in low complexity. Positions 303–322 (ETAPTTTPDGTNGNPKTISD) are disordered. Trp-334 and Asn-362 together coordinate pyridoxal 5'-phosphate.

Belongs to the kynureninase family. In terms of assembly, homodimer. Pyridoxal 5'-phosphate serves as cofactor.

The protein resides in the cytoplasm. It catalyses the reaction L-kynurenine + H2O = anthranilate + L-alanine + H(+). It carries out the reaction 3-hydroxy-L-kynurenine + H2O = 3-hydroxyanthranilate + L-alanine + H(+). It functions in the pathway amino-acid degradation; L-kynurenine degradation; L-alanine and anthranilate from L-kynurenine: step 1/1. Its pathway is cofactor biosynthesis; NAD(+) biosynthesis; quinolinate from L-kynurenine: step 2/3. Its function is as follows. Catalyzes the cleavage of L-kynurenine (L-Kyn) and L-3-hydroxykynurenine (L-3OHKyn) into anthranilic acid (AA) and 3-hydroxyanthranilic acid (3-OHAA), respectively. The polypeptide is Kynureninase 1 (Phaeosphaeria nodorum (strain SN15 / ATCC MYA-4574 / FGSC 10173) (Glume blotch fungus)).